Consider the following 937-residue polypeptide: MORC family CW-type zinc finger protein 4 (937 aa).

The CW-type zinc finger occupies 420–472 (KVPDQTWVQCDECLKWRKLPGKIDPSMLPARWFCYYNSHPKYRRCSVPEEQEL). Zn(2+) contacts are provided by Cys-429, Cys-432, Cys-453, and Cys-464. The tract at residues 606-637 (PEGENSHDKSSSERSTPPYLFPEYPEASKNTG) is disordered. Residues 762 to 876 (KLKNQRELEE…LEMLQKAQVS (115 aa)) are a coiled coil.

In terms of tissue distribution, expressed at low levels in normal tissues, with highest expression levels in placenta and testis. Expression is significantly increased in subset of diffuse large B-cell lymphomas.

It is found in the nucleus. Its function is as follows. Histone methylation reader which binds to non-methylated (H3K4me0), monomethylated (H3K4me1), dimethylated (H3K4me2) and trimethylated (H3K4me3) 'Lys-4' on histone H3. The order of binding preference is H3K4me3 &gt; H3K4me2 &gt; H3K4me1 &gt; H3K4me0. This chain is MORC family CW-type zinc finger protein 4 (MORC4), found in Homo sapiens (Human).